Here is a 158-residue protein sequence, read N- to C-terminus: Endoribonuclease YbeY (158 aa).

Zn(2+)-binding residues include His124, His128, and His134.

This sequence belongs to the endoribonuclease YbeY family. Requires Zn(2+) as cofactor.

The protein localises to the cytoplasm. In terms of biological role, single strand-specific metallo-endoribonuclease involved in late-stage 70S ribosome quality control and in maturation of the 3' terminus of the 16S rRNA. The sequence is that of Endoribonuclease YbeY from Caldanaerobacter subterraneus subsp. tengcongensis (strain DSM 15242 / JCM 11007 / NBRC 100824 / MB4) (Thermoanaerobacter tengcongensis).